The sequence spans 359 residues: Peptide chain release factor 1 (359 aa).

An N5-methylglutamine modification is found at Q233.

Belongs to the prokaryotic/mitochondrial release factor family. Methylated by PrmC. Methylation increases the termination efficiency of RF1.

It is found in the cytoplasm. Its function is as follows. Peptide chain release factor 1 directs the termination of translation in response to the peptide chain termination codons UAG and UAA. This is Peptide chain release factor 1 from Orientia tsutsugamushi (strain Ikeda) (Rickettsia tsutsugamushi).